The primary structure comprises 261 residues: Triosephosphate isomerase (261 aa).

Substrate is bound at residue 10–12; that stretch reads NWK. His-100 serves as the catalytic Electrophile. The active-site Proton acceptor is the Glu-172. Substrate-binding positions include Gly-178, Ser-218, and 239 to 240; that span reads GG.

This sequence belongs to the triosephosphate isomerase family. In terms of assembly, homodimer.

It localises to the cytoplasm. The catalysed reaction is D-glyceraldehyde 3-phosphate = dihydroxyacetone phosphate. It functions in the pathway carbohydrate biosynthesis; gluconeogenesis. It participates in carbohydrate degradation; glycolysis; D-glyceraldehyde 3-phosphate from glycerone phosphate: step 1/1. In terms of biological role, involved in the gluconeogenesis. Catalyzes stereospecifically the conversion of dihydroxyacetone phosphate (DHAP) to D-glyceraldehyde-3-phosphate (G3P). The sequence is that of Triosephosphate isomerase from Nocardia farcinica (strain IFM 10152).